The following is a 481-amino-acid chain: Alginate biosynthesis protein AlgA (481 aa).

Belongs to the mannose-6-phosphate isomerase type 2 family. As to quaternary structure, monomer. Co(2+) serves as cofactor.

The catalysed reaction is D-mannose 6-phosphate = D-fructose 6-phosphate. It carries out the reaction alpha-D-mannose 1-phosphate + GTP + H(+) = GDP-alpha-D-mannose + diphosphate. The protein operates within nucleotide-sugar biosynthesis; GDP-alpha-D-mannose biosynthesis; GDP-alpha-D-mannose from alpha-D-mannose 1-phosphate (GTP route): step 1/1. Its pathway is nucleotide-sugar biosynthesis; GDP-alpha-D-mannose biosynthesis; alpha-D-mannose 1-phosphate from D-fructose 6-phosphate: step 1/2. Functionally, produces a precursor for alginate polymerization. The alginate layer provides a protective barrier against host immune defenses and antibiotics. This Pseudomonas aeruginosa (strain ATCC 15692 / DSM 22644 / CIP 104116 / JCM 14847 / LMG 12228 / 1C / PRS 101 / PAO1) protein is Alginate biosynthesis protein AlgA (algA).